The chain runs to 748 residues: EF-hand domain-containing family member C2 (748 aa).

3 DM10 domains span residues 75 to 182 (DKQV…VKMG), 226 to 366 (DRQV…RSKY), and 428 to 535 (VSNV…EQHA). EF-hand domains lie at 556–591 (EQQK…LDVE) and 631–666 (EKFS…FRLP).

Its subcellular location is the cytoplasm. The protein localises to the cytoskeleton. The protein resides in the cilium axoneme. Microtubule inner protein (MIP) part of the dynein-decorated doublet microtubules (DMTs) in cilia axoneme, which is required for motile cilia beating. This chain is EF-hand domain-containing family member C2 (efhc2), found in Danio rerio (Zebrafish).